A 158-amino-acid chain; its full sequence is N5-carboxyaminoimidazole ribonucleotide mutase (158 aa).

Substrate-binding residues include serine 10, aspartate 13, and arginine 40.

This sequence belongs to the AIR carboxylase family. Class I subfamily.

It carries out the reaction 5-carboxyamino-1-(5-phospho-D-ribosyl)imidazole + H(+) = 5-amino-1-(5-phospho-D-ribosyl)imidazole-4-carboxylate. The protein operates within purine metabolism; IMP biosynthesis via de novo pathway; 5-amino-1-(5-phospho-D-ribosyl)imidazole-4-carboxylate from 5-amino-1-(5-phospho-D-ribosyl)imidazole (N5-CAIR route): step 2/2. In terms of biological role, catalyzes the conversion of N5-carboxyaminoimidazole ribonucleotide (N5-CAIR) to 4-carboxy-5-aminoimidazole ribonucleotide (CAIR). This is N5-carboxyaminoimidazole ribonucleotide mutase from Saccharolobus solfataricus (strain ATCC 35092 / DSM 1617 / JCM 11322 / P2) (Sulfolobus solfataricus).